We begin with the raw amino-acid sequence, 402 residues long: Imidazolonepropionase (402 aa).

The Fe(3+) site is built by H69 and H71. Zn(2+) contacts are provided by H69 and H71. 4-imidazolone-5-propanoate contacts are provided by R78, Y141, and H174. Position 141 (Y141) interacts with N-formimidoyl-L-glutamate. H239 is a binding site for Fe(3+). H239 provides a ligand contact to Zn(2+). 4-imidazolone-5-propanoate is bound at residue Q242. A Fe(3+)-binding site is contributed by D314. D314 is a Zn(2+) binding site. N316 and G318 together coordinate N-formimidoyl-L-glutamate. T319 lines the 4-imidazolone-5-propanoate pocket.

Belongs to the metallo-dependent hydrolases superfamily. HutI family. Requires Zn(2+) as cofactor. Fe(3+) serves as cofactor.

Its subcellular location is the cytoplasm. It carries out the reaction 4-imidazolone-5-propanoate + H2O = N-formimidoyl-L-glutamate. The protein operates within amino-acid degradation; L-histidine degradation into L-glutamate; N-formimidoyl-L-glutamate from L-histidine: step 3/3. Its function is as follows. Catalyzes the hydrolytic cleavage of the carbon-nitrogen bond in imidazolone-5-propanoate to yield N-formimidoyl-L-glutamate. It is the third step in the universal histidine degradation pathway. The chain is Imidazolonepropionase from Maricaulis maris (strain MCS10) (Caulobacter maris).